The primary structure comprises 187 residues: MASTSDFKNGLVLQIEGQLWTITEFQHVKPGKGPAFVRTKLKNVLSGKVVDKTFNAGVKVDTATVDRRDMTYLYHDGTDYIFMDGDTYDQISISEATVGDGARFMLENMAVQVATHEDVPLFVELPVTVELVVQHTDPGLQGDRSTGGTKPATLETGAEINVPLFINTGDKLKVDSRDGNYLGRVNS.

The protein belongs to the elongation factor P family.

It localises to the cytoplasm. It functions in the pathway protein biosynthesis; polypeptide chain elongation. In terms of biological role, involved in peptide bond synthesis. Stimulates efficient translation and peptide-bond synthesis on native or reconstituted 70S ribosomes in vitro. Probably functions indirectly by altering the affinity of the ribosome for aminoacyl-tRNA, thus increasing their reactivity as acceptors for peptidyl transferase. This chain is Elongation factor P, found in Rhodococcus opacus (strain B4).